The chain runs to 382 residues: Mannitol-1-phosphate 5-dehydrogenase (382 aa).

3–14 (ALHFGAGNIGRG) is a binding site for NAD(+).

This sequence belongs to the mannitol dehydrogenase family.

It carries out the reaction D-mannitol 1-phosphate + NAD(+) = beta-D-fructose 6-phosphate + NADH + H(+). This chain is Mannitol-1-phosphate 5-dehydrogenase (mtlD), found in Klebsiella pneumoniae.